The primary structure comprises 292 residues: 33 kDa chaperonin (292 aa).

Cystine bridges form between Cys229-Cys231 and Cys262-Cys265.

It belongs to the HSP33 family. Post-translationally, under oxidizing conditions two disulfide bonds are formed involving the reactive cysteines. Under reducing conditions zinc is bound to the reactive cysteines and the protein is inactive.

The protein resides in the cytoplasm. Its function is as follows. Redox regulated molecular chaperone. Protects both thermally unfolding and oxidatively damaged proteins from irreversible aggregation. Plays an important role in the bacterial defense system toward oxidative stress. The chain is 33 kDa chaperonin from Photobacterium profundum (strain SS9).